The following is a 418-amino-acid chain: Glutamyl-tRNA reductase (418 aa).

Substrate is bound by residues 49–52 (TCNR), serine 109, 114–116 (EPQ), and glutamine 120. The active-site Nucleophile is the cysteine 50. 189–194 (GAGETI) is a binding site for NADP(+).

Belongs to the glutamyl-tRNA reductase family. In terms of assembly, homodimer.

The enzyme catalyses (S)-4-amino-5-oxopentanoate + tRNA(Glu) + NADP(+) = L-glutamyl-tRNA(Glu) + NADPH + H(+). Its pathway is porphyrin-containing compound metabolism; protoporphyrin-IX biosynthesis; 5-aminolevulinate from L-glutamyl-tRNA(Glu): step 1/2. Catalyzes the NADPH-dependent reduction of glutamyl-tRNA(Glu) to glutamate 1-semialdehyde (GSA). This Escherichia coli O6:K15:H31 (strain 536 / UPEC) protein is Glutamyl-tRNA reductase.